The following is a 444-amino-acid chain: Light-independent protochlorophyllide reductase subunit N (444 aa).

C36, C61, and C118 together coordinate [4Fe-4S] cluster.

The protein belongs to the BchN/ChlN family. In terms of assembly, protochlorophyllide reductase is composed of three subunits; BchL, BchN and BchB. Forms a heterotetramer of two BchB and two BchN subunits. It depends on [4Fe-4S] cluster as a cofactor.

The catalysed reaction is chlorophyllide a + oxidized 2[4Fe-4S]-[ferredoxin] + 2 ADP + 2 phosphate = protochlorophyllide a + reduced 2[4Fe-4S]-[ferredoxin] + 2 ATP + 2 H2O. The protein operates within porphyrin-containing compound metabolism; bacteriochlorophyll biosynthesis (light-independent). Component of the dark-operative protochlorophyllide reductase (DPOR) that uses Mg-ATP and reduced ferredoxin to reduce ring D of protochlorophyllide (Pchlide) to form chlorophyllide a (Chlide). This reaction is light-independent. The NB-protein (BchN-BchB) is the catalytic component of the complex. This Chloroflexus aurantiacus (strain ATCC 29366 / DSM 635 / J-10-fl) protein is Light-independent protochlorophyllide reductase subunit N.